Reading from the N-terminus, the 408-residue chain is Multidrug resistance protein MdtG (408 aa).

11 consecutive transmembrane segments (helical) span residues 16 to 36 (LIVA…VMPF), 58 to 78 (IVFS…GGLA), 92 to 112 (LGMG…QFLI), 115 to 135 (ALLG…ATQV), 146 to 166 (TLST…GLLA), 173 to 193 (PVFF…LFCI), 224 to 244 (LFVT…ILTL), 256 to 276 (VAFI…LSAP), 290 to 310 (ILIT…YVQT), 319 to 339 (FLLG…LVYN), and 378 to 398 (AVFL…WNSL).

The protein belongs to the major facilitator superfamily. DHA1 family. MdtG (TC 2.A.1.2.20) subfamily.

Its subcellular location is the cell inner membrane. Confers resistance to fosfomycin and deoxycholate. The polypeptide is Multidrug resistance protein MdtG (Escherichia coli (strain 55989 / EAEC)).